Reading from the N-terminus, the 313-residue chain is Protein OPG185 (313 aa).

The signal sequence occupies residues 1-16 (MTQLPILLLLISLVYA). At 17-274 (TPSPQTSKKI…TSISNYKTKD (258 aa)) the chain is on the virion surface side. N-linked (GlcNAc...) asparagine; by host glycans are attached at residues asparagine 37, asparagine 69, asparagine 112, asparagine 159, asparagine 194, and asparagine 252. A helical transmembrane segment spans residues 275 to 295 (FVEIFGITTLIILSAVAIFCI). The Intravirion segment spans residues 296–313 (TYYICNKHPRKYKTENKV).

The protein belongs to the orthopoxvirus OPG185 family. Heterodimerizes with OPG040. The heterodimer OPG185-OPG040 interacts with components of the entry fusion complex OPG143 and OPG094. Heterodimer with C3/VPC protein; disulfide-linked. Glycosylated; contains phosphate and sulfate-substituted glycans. O-glycosylation is required for hemagglutination and hemadsorption activities of infected cell membranes.

It is found in the virion membrane. The protein localises to the host membrane. Functionally, prevents cell to cell fusion by interacting with and directing the viral OPG040 protein on the host plasma membrane. The OPG185-OPG040 complex associates with components of the entry fusion complex (EFC) presumably to avoid superinfection and syncytium formation. Via its interaction with C3/VCP protein, protects the infected cell and probably also the extracellular enveloped virus from complement attack. In Monkeypox virus, this protein is Protein OPG185 (OPG185).